The chain runs to 464 residues: Dihydrolipoyllysine-residue succinyltransferase component of 2-oxoglutarate dehydrogenase complex 1, mitochondrial (464 aa).

A mitochondrion-targeting transit peptide spans 1 to 86 (MMLRAVFRRA…TALQRWVRPF (86 aa)). One can recognise a Lipoyl-binding domain in the interval 93-168 (VVEAVVPHMG…EPGNKVARIS (76 aa)). K134 carries the N6-lipoyllysine modification. Positions 168–242 (STSADAVSHV…DRERRVPMTR (75 aa)) are disordered. Residues 196-210 (EKPKVESTKVAEKPK) show a composition bias toward basic and acidic residues. Positions 211 to 220 (APSPPPPPPS) are enriched in pro residues. Catalysis depends on residues H435 and D439.

It belongs to the 2-oxoacid dehydrogenase family. As to quaternary structure, forms a 24-polypeptide structural core with octahedral symmetry. (R)-lipoate is required as a cofactor.

Its subcellular location is the mitochondrion. The catalysed reaction is N(6)-[(R)-dihydrolipoyl]-L-lysyl-[protein] + succinyl-CoA = N(6)-[(R)-S(8)-succinyldihydrolipoyl]-L-lysyl-[protein] + CoA. It functions in the pathway amino-acid degradation; L-lysine degradation via saccharopine pathway; glutaryl-CoA from L-lysine: step 6/6. In terms of biological role, the 2-oxoglutarate dehydrogenase complex catalyzes the overall conversion of 2-oxoglutarate to succinyl-CoA and CO(2). It contains multiple copies of three enzymatic components: 2-oxoglutarate dehydrogenase (E1), dihydrolipoamide succinyltransferase (E2) and lipoamide dehydrogenase (E3). In Arabidopsis thaliana (Mouse-ear cress), this protein is Dihydrolipoyllysine-residue succinyltransferase component of 2-oxoglutarate dehydrogenase complex 1, mitochondrial.